We begin with the raw amino-acid sequence, 200 residues long: Protein GrpE (200 aa).

A compositionally biased stretch (polar residues) spans Met1–Asn11. Residues Met1–Asn25 form a disordered region.

The protein belongs to the GrpE family. In terms of assembly, homodimer.

It localises to the cytoplasm. Functionally, participates actively in the response to hyperosmotic and heat shock by preventing the aggregation of stress-denatured proteins, in association with DnaK and GrpE. It is the nucleotide exchange factor for DnaK and may function as a thermosensor. Unfolded proteins bind initially to DnaJ; upon interaction with the DnaJ-bound protein, DnaK hydrolyzes its bound ATP, resulting in the formation of a stable complex. GrpE releases ADP from DnaK; ATP binding to DnaK triggers the release of the substrate protein, thus completing the reaction cycle. Several rounds of ATP-dependent interactions between DnaJ, DnaK and GrpE are required for fully efficient folding. The sequence is that of Protein GrpE from Shewanella pealeana (strain ATCC 700345 / ANG-SQ1).